Consider the following 568-residue polypeptide: Urease subunit alpha (568 aa).

A Urease domain is found at 131-568; that stretch reads GGMDAHIHFI…LPLAQRYFLY (438 aa). Ni(2+)-binding residues include H136, H138, and K219. K219 is modified (N6-carboxylysine). H221 contacts substrate. Ni(2+) contacts are provided by H248 and H274. H322 functions as the Proton donor in the catalytic mechanism. D362 is a binding site for Ni(2+).

The protein belongs to the metallo-dependent hydrolases superfamily. Urease alpha subunit family. Heterotrimer of UreA (gamma), UreB (beta) and UreC (alpha) subunits. Three heterotrimers associate to form the active enzyme. Ni cation serves as cofactor. Post-translationally, carboxylation allows a single lysine to coordinate two nickel ions.

Its subcellular location is the cytoplasm. It carries out the reaction urea + 2 H2O + H(+) = hydrogencarbonate + 2 NH4(+). The protein operates within nitrogen metabolism; urea degradation; CO(2) and NH(3) from urea (urease route): step 1/1. The chain is Urease subunit alpha from Cereibacter sphaeroides (strain ATCC 17025 / ATH 2.4.3) (Rhodobacter sphaeroides).